Here is a 240-residue protein sequence, read N- to C-terminus: Poxin (240 aa).

The active-site Proton donor is the histidine 46. Tyrosine 181 functions as the Shared with catalytic histidine of dimeric partner in the catalytic mechanism. The active-site Proton acceptor; shared with catalytic histidine of dimeric partner is lysine 185.

This sequence belongs to the poxin family. In terms of assembly, homodimer.

The enzyme catalyses 2',3'-cGAMP + H2O = Gp(2'-5')Ap(3') + H(+). Its function is as follows. Nuclease that cleaves host 2',3'-cGAMP. This is Poxin (P26) from Lepidoptera (butterflies and moths).